Consider the following 723-residue polypeptide: BBSome complex assembly protein BBS10 (723 aa).

The protein belongs to the TCP-1 chaperonin family. As to quaternary structure, component of a complex composed at least of MKKS, BBS10, BBS12, TCP1, CCT2, CCT3, CCT4, CCT5 and CCT8.

The protein resides in the cell projection. It localises to the cilium. Functionally, probable molecular chaperone that assists the folding of proteins upon ATP hydrolysis. Plays a role in the assembly of BBSome, a complex involved in ciliogenesis regulating transports vesicles to the cilia. Involved in adipogenic differentiation. In Homo sapiens (Human), this protein is BBSome complex assembly protein BBS10 (BBS10).